The primary structure comprises 220 residues: Claudin-3 (220 aa).

At 1 to 8 the chain is on the cytoplasmic side; the sequence is MSMGLEIT. Residues 9–29 form a helical membrane-spanning segment; the sequence is GTALAVLGWLGTIVCCALPMW. The Extracellular portion of the chain corresponds to 30-80; the sequence is RVSAFIGSNIITSQNIWEGLWMNCVVQSTGQMQCKVYDSLLALPQDLQAAR. The helical transmembrane segment at 81-101 threads the bilayer; that stretch reads ALIVVAILLAAFGLLVALVGA. At 102–115 the chain is on the cytoplasmic side; that stretch reads QCTNCVQDDTAKAK. A helical transmembrane segment spans residues 116–136; the sequence is ITIVAGVLFLLAALLTLVPVS. The Extracellular portion of the chain corresponds to 137–159; it reads WSANTIIRDFYNPVVPEAQKREM. A helical transmembrane segment spans residues 160-180; it reads GAGLYVGWAAAALQLLGGALL. The Cytoplasmic segment spans residues 181–220; sequence CCSCPPREKKYTATKVVYSAPRSTGPGASLGTGYDRKDYV. At Tyr198 the chain carries Phosphotyrosine. Ser199 and Ser209 each carry phosphoserine. The interactions with TJP1, TJP2 and TJP3 stretch occupies residues 219-220; it reads YV.

It belongs to the claudin family. In terms of assembly, can form homo- and heteropolymers with other CLDN. Homopolymers interact with CLDN1 and CLDN2 homopolymers. Interacts in cis (within the same plasma membrane) with CLDN19. Directly interacts with TJP1/ZO-1, TJP2/ZO-2 and TJP3/ZO-3.

It is found in the cell junction. The protein resides in the tight junction. Its subcellular location is the cell membrane. In terms of biological role, barrier-forming claudin. Plays a major role in tight junction-specific obliteration of the intercellular space, through calcium-independent cell-adhesion activity. This is Claudin-3 (CLDN3) from Homo sapiens (Human).